A 204-amino-acid polypeptide reads, in one-letter code: Molybdenum cofactor guanylyltransferase (204 aa).

GTP contacts are provided by residues 12–14, K25, N53, D71, and D101; that span reads LAG. D101 contributes to the Mg(2+) binding site.

It belongs to the MobA family. In terms of assembly, monomer. Mg(2+) is required as a cofactor.

Its subcellular location is the cytoplasm. It catalyses the reaction Mo-molybdopterin + GTP + H(+) = Mo-molybdopterin guanine dinucleotide + diphosphate. In terms of biological role, transfers a GMP moiety from GTP to Mo-molybdopterin (Mo-MPT) cofactor (Moco or molybdenum cofactor) to form Mo-molybdopterin guanine dinucleotide (Mo-MGD) cofactor. The polypeptide is Molybdenum cofactor guanylyltransferase (Ralstonia pickettii (strain 12J)).